The chain runs to 151 residues: Large ribosomal subunit protein bL9 (151 aa).

Belongs to the bacterial ribosomal protein bL9 family.

Its function is as follows. Binds to the 23S rRNA. In Bordetella avium (strain 197N), this protein is Large ribosomal subunit protein bL9.